Consider the following 141-residue polypeptide: MKSHGLINDSIGDMLTRIRNACLAKKSSVSIPFTRLNQNIAQILEQEGFIQTYQVSLDSQDLTIRLKYRSKKIYRGKKKESCITNLKRISKPGLRIYSNHKDILRILGGTGIVIVSTPEGLMTDREARLRGIGGELLCSVW.

Belongs to the universal ribosomal protein uS8 family. Part of the 30S ribosomal subunit.

Its subcellular location is the plastid. The protein localises to the chloroplast. Its function is as follows. One of the primary rRNA binding proteins, it binds directly to 16S rRNA central domain where it helps coordinate assembly of the platform of the 30S subunit. This Chlamydomonas reinhardtii (Chlamydomonas smithii) protein is Small ribosomal subunit protein uS8c (rps8).